The following is a 197-amino-acid chain: Ribonuclease HII (197 aa).

The RNase H type-2 domain occupies Ile-4 to Ser-197. A divalent metal cation contacts are provided by Asp-10, Glu-11, and Asp-106.

Belongs to the RNase HII family. It depends on Mn(2+) as a cofactor. Requires Mg(2+) as cofactor.

Its subcellular location is the cytoplasm. It carries out the reaction Endonucleolytic cleavage to 5'-phosphomonoester.. In terms of biological role, endonuclease that specifically degrades the RNA of RNA-DNA hybrids. The protein is Ribonuclease HII of Polynucleobacter necessarius subsp. necessarius (strain STIR1).